We begin with the raw amino-acid sequence, 139 residues long: Natriuretic peptide Mf-NP (139 aa).

The signal sequence occupies residues 1 to 25; it reads MVGLSRLTGGGLLLVLALLPLALDG. Residues 26–75 constitute a propeptide that is removed on maturation; it reads KPLEEAPTAPSRIIPFSRPVRKESQAVLDPMVHPERPAGSGDDGDLSRLE. A disulfide bridge links Cys86 with Cys102. Positions 117–139 are excised as a propeptide; sequence IIPFSRPVRKESRAALDRMQHPG.

It belongs to the natriuretic peptide family. In terms of tissue distribution, expressed by the venom gland.

The protein localises to the secreted. Its function is as follows. Natriuretic peptide that dose-dependently induces the rapid relaxation of rat aortic strips phenylephrine-precontracted. Acts by stimulating cGMP production in a dose-dependent manner (by probably activating NPR1 and/or NPR2). May also show potent hypotensive effects. The polypeptide is Natriuretic peptide Mf-NP (Micrurus fulvius (Eastern coral snake)).